The following is a 1026-amino-acid chain: Multidrug resistance protein MdtC (1026 aa).

11 helical membrane-spanning segments follow: residues 15-35 (ILIA…LPVA), 333-353 (EVEE…FLFL), 360-380 (LIPA…MYLC), 387-407 (LSLM…IVVL), 431-451 (VGFT…PLLL), 463-483 (FAVT…TLTP), 528-548 (LVGV…IAIP), 853-873 (LILI…LYES), 897-917 (LFNA…IGIV), 953-973 (PIMM…LSGG), and 984-1004 (ITIV…TPVV).

It belongs to the resistance-nodulation-cell division (RND) (TC 2.A.6) family. MdtC subfamily. In terms of assembly, part of a tripartite efflux system composed of MdtA, MdtB and MdtC. MdtC forms a heteromultimer with MdtB.

It is found in the cell inner membrane. This is Multidrug resistance protein MdtC from Salmonella schwarzengrund (strain CVM19633).